Here is a 367-residue protein sequence, read N- to C-terminus: tRNA-specific 2-thiouridylase MnmA (367 aa).

Residues 6-13 and methionine 32 each bind ATP; that span reads AMSGGVDS. Cysteine 101 functions as the Nucleophile in the catalytic mechanism. A disulfide bridge links cysteine 101 with cysteine 193. Position 125 (glycine 125) interacts with ATP. An interaction with tRNA region spans residues 143–145; sequence KDQ. Cysteine 193 acts as the Cysteine persulfide intermediate in catalysis.

The protein belongs to the MnmA/TRMU family.

It localises to the cytoplasm. It carries out the reaction S-sulfanyl-L-cysteinyl-[protein] + uridine(34) in tRNA + AH2 + ATP = 2-thiouridine(34) in tRNA + L-cysteinyl-[protein] + A + AMP + diphosphate + H(+). Functionally, catalyzes the 2-thiolation of uridine at the wobble position (U34) of tRNA, leading to the formation of s(2)U34. In Mycobacterium tuberculosis (strain CDC 1551 / Oshkosh), this protein is tRNA-specific 2-thiouridylase MnmA.